The sequence spans 365 residues: Forkhead box protein E4 (365 aa).

Basic and acidic residues predominate over residues 1-13 (MDSPDSVRVKCES). Residues 1–46 (MDSPDSVRVKCESKGSCSPEEGLNNGLPEEHNQASGGRRRKRPVQR) are disordered. The fork-head DNA-binding region spans 48–142 (KPPYSYIALI…DNGSFLRRRK (95 aa)).

In terms of tissue distribution, first expressed at the end of gastrulation (stage 13) in the anterior ectodermal placode. During intermediate neural plate stages (stages 14-16), expression expands to the presumptive nasal ectoderm (PNE) and the presumptive lens ectoderm (PLE). By stages 18-21, expression begins to deplete in the PNE, while intensifying in the PLE so that by late neural stages (stages 22), expression is restricted to the PLE. Throughout tailbud stages (stage 23-31), expression is maintained in the lens placode and lens vesicle. In the maturing lens (stage 32-onwards), expression is restricted to the anterior lens epithelium, where it remains during the tadpole stage. In tadpoles there is additional expression in the ventral midline of the pharynx. Expression continues in the adult eye.

Its subcellular location is the nucleus. Functionally, probable transcription factor. Mediates lens formation in the embryo by promoting the proliferation of the specified lens ectoderm and suppressing its terminal differentiation. The polypeptide is Forkhead box protein E4 (Xenopus laevis (African clawed frog)).